Consider the following 987-residue polypeptide: ATP-dependent 6-phosphofructokinase subunit alpha (987 aa).

The interval 1–602 (MPSSSDAINR…DYRYFRDISI (602 aa)) is N-terminal catalytic PFK domain 1. Residues glycine 237, 300–301 (RC), and 330–333 (GDGS) contribute to the ATP site. Aspartate 331 is a Mg(2+) binding site. Residues 376 to 378 (SID), arginine 413, 420 to 422 (MGR), glutamate 477, arginine 504, and 510 to 513 (HVQR) each bind beta-D-fructose 6-phosphate. The active-site Proton acceptor is aspartate 378. Residues 603 to 616 (YDDGSKQLSEDKRL) form an interdomain linker region. A C-terminal regulatory PFK domain 2 region spans residues 617-987 (NIAIVHVGAA…KSLLKKQERY (371 aa)). Residues arginine 686, 743–747 (TVSNN), arginine 781, 788–790 (QGG), glutamate 848, arginine 874, 880–883 (HVQQ), and arginine 958 contribute to the beta-D-fructose 2,6-bisphosphate site.

This sequence belongs to the phosphofructokinase type A (PFKA) family. ATP-dependent PFK group I subfamily. Eukaryotic two domain clade 'E' sub-subfamily. In terms of assembly, heterooctamer of 4 alpha and 4 beta chains. Mg(2+) serves as cofactor.

It is found in the cytoplasm. It catalyses the reaction beta-D-fructose 6-phosphate + ATP = beta-D-fructose 1,6-bisphosphate + ADP + H(+). Its pathway is carbohydrate degradation; glycolysis; D-glyceraldehyde 3-phosphate and glycerone phosphate from D-glucose: step 3/4. Allosterically activated by ADP, AMP, or fructose 2,6-bisphosphate, and allosterically inhibited by ATP or citrate. In terms of biological role, catalyzes the phosphorylation of D-fructose 6-phosphate to fructose 1,6-bisphosphate by ATP, the first committing step of glycolysis. This chain is ATP-dependent 6-phosphofructokinase subunit alpha (PFK1), found in Candida albicans (Yeast).